The following is a 240-amino-acid chain: Phosphoribosylaminoimidazole-succinocarboxamide synthase (240 aa).

Belongs to the SAICAR synthetase family.

It catalyses the reaction 5-amino-1-(5-phospho-D-ribosyl)imidazole-4-carboxylate + L-aspartate + ATP = (2S)-2-[5-amino-1-(5-phospho-beta-D-ribosyl)imidazole-4-carboxamido]succinate + ADP + phosphate + 2 H(+). Its pathway is purine metabolism; IMP biosynthesis via de novo pathway; 5-amino-1-(5-phospho-D-ribosyl)imidazole-4-carboxamide from 5-amino-1-(5-phospho-D-ribosyl)imidazole-4-carboxylate: step 1/2. The sequence is that of Phosphoribosylaminoimidazole-succinocarboxamide synthase from Anoxybacillus flavithermus (strain DSM 21510 / WK1).